The following is a 245-amino-acid chain: MADS-box transcription factor 55 (245 aa).

An MADS-box domain is found at 1-61 (MARERREIRR…GKLSQFASSN (61 aa)). A K-box domain is found at 109-199 (LQLEHSKCSS…RDQMPQVPTA (91 aa)). The disordered stretch occupies residues 197–245 (PTAGLAVPDTENVLTEDGQSSESVMTALNSGSSQDNDDGSDISLKLGLP). A compositionally biased stretch (polar residues) spans 213–224 (DGQSSESVMTAL).

As to expression, expressed in roots, shoots and developing panicles. Expressed in shoots.

It is found in the nucleus. Functionally, transcription factor that acts as a negative regulator of brassinosteroid signaling. The sequence is that of MADS-box transcription factor 55 (MADS55) from Oryza sativa subsp. japonica (Rice).